A 655-amino-acid polypeptide reads, in one-letter code: Acetyl-coenzyme A synthetase (655 aa).

CoA is bound by residues 193–196 and Thr313; that span reads RGNK. Residues 389–391, 413–418, Asp502, and Arg517 each bind ATP; these read GEP and DTWWQT. Ser525 contacts CoA. Arg528 lines the ATP pocket. Residues Val539 and His541 each coordinate Mg(2+). Residue Arg586 participates in CoA binding. Lys611 is subject to N6-acetyllysine.

It belongs to the ATP-dependent AMP-binding enzyme family. Mg(2+) is required as a cofactor. In terms of processing, acetylated. Deacetylation by the SIR2-homolog deacetylase activates the enzyme.

It carries out the reaction acetate + ATP + CoA = acetyl-CoA + AMP + diphosphate. Catalyzes the conversion of acetate into acetyl-CoA (AcCoA), an essential intermediate at the junction of anabolic and catabolic pathways. AcsA undergoes a two-step reaction. In the first half reaction, AcsA combines acetate with ATP to form acetyl-adenylate (AcAMP) intermediate. In the second half reaction, it can then transfer the acetyl group from AcAMP to the sulfhydryl group of CoA, forming the product AcCoA. In Psychrobacter cryohalolentis (strain ATCC BAA-1226 / DSM 17306 / VKM B-2378 / K5), this protein is Acetyl-coenzyme A synthetase.